The primary structure comprises 662 residues: Biosynthetic arginine decarboxylase (662 aa).

Residue Lys-126 is modified to N6-(pyridoxal phosphate)lysine. 308 to 318 (LNVGGGLGVDY) serves as a coordination point for substrate.

Belongs to the Orn/Lys/Arg decarboxylase class-II family. SpeA subfamily. Requires Mg(2+) as cofactor. Pyridoxal 5'-phosphate is required as a cofactor.

The catalysed reaction is L-arginine + H(+) = agmatine + CO2. In terms of biological role, catalyzes the biosynthesis of agmatine from arginine. In Deinococcus radiodurans (strain ATCC 13939 / DSM 20539 / JCM 16871 / CCUG 27074 / LMG 4051 / NBRC 15346 / NCIMB 9279 / VKM B-1422 / R1), this protein is Biosynthetic arginine decarboxylase.